An 83-amino-acid polypeptide reads, in one-letter code: Weak neurotoxin WNTX33 (83 aa).

Residues 1-21 form the signal peptide; sequence MKTLLLTLVVVTIVCLDLGYS. 4 cysteine pairs are disulfide-bonded: C24–C45, C38–C62, C64–C75, and C76–C81.

It belongs to the three-finger toxin family. Short-chain subfamily. In terms of tissue distribution, expressed by the venom gland.

The protein localises to the secreted. The protein is Weak neurotoxin WNTX33 of Ophiophagus hannah (King cobra).